A 789-amino-acid chain; its full sequence is Glycerol-3-phosphate acyltransferase (789 aa).

The HXXXXD motif signature appears at 275-280 (SHRSYI).

This sequence belongs to the GPAT/DAPAT family.

It is found in the cell membrane. It catalyses the reaction sn-glycerol 3-phosphate + an acyl-CoA = a 1-acyl-sn-glycero-3-phosphate + CoA. The protein operates within phospholipid metabolism; CDP-diacylglycerol biosynthesis; CDP-diacylglycerol from sn-glycerol 3-phosphate: step 1/3. The chain is Glycerol-3-phosphate acyltransferase from Mycobacterium bovis (strain BCG / Pasteur 1173P2).